Reading from the N-terminus, the 185-residue chain is Peptidyl-tRNA hydrolase (185 aa).

Tyrosine 14 provides a ligand contact to tRNA. The active-site Proton acceptor is the histidine 19. The tRNA site is built by tyrosine 64, asparagine 66, and asparagine 112.

Belongs to the PTH family. As to quaternary structure, monomer.

The protein localises to the cytoplasm. The enzyme catalyses an N-acyl-L-alpha-aminoacyl-tRNA + H2O = an N-acyl-L-amino acid + a tRNA + H(+). Its function is as follows. Hydrolyzes ribosome-free peptidyl-tRNAs (with 1 or more amino acids incorporated), which drop off the ribosome during protein synthesis, or as a result of ribosome stalling. Catalyzes the release of premature peptidyl moieties from peptidyl-tRNA molecules trapped in stalled 50S ribosomal subunits, and thus maintains levels of free tRNAs and 50S ribosomes. The polypeptide is Peptidyl-tRNA hydrolase (Pediococcus pentosaceus (strain ATCC 25745 / CCUG 21536 / LMG 10740 / 183-1w)).